Here is a 576-residue protein sequence, read N- to C-terminus: 9-cis-epoxycarotenoid dioxygenase NCED2, chloroplastic (576 aa).

The N-terminal 34 residues, 1–34, are a transit peptide targeting the chloroplast; that stretch reads MEVPIAAMTFAHPANVMTLASRQPKSKRSHISPA. Positions 270, 319, 385, and 563 each coordinate Fe cation.

The protein belongs to the carotenoid oxygenase family. Fe(2+) is required as a cofactor.

The protein resides in the plastid. The protein localises to the chloroplast. It catalyses the reaction a 9-cis-epoxycarotenoid + O2 = a 12'-apo-carotenal + 2-cis,4-trans-xanthoxin. The catalysed reaction is 9-cis-violaxanthin + O2 = (3S,5R,6S)-5,6-epoxy-3-hydroxy-5,6-dihydro-12'-apo-beta-caroten-12'-al + 2-cis,4-trans-xanthoxin. It carries out the reaction 9'-cis-neoxanthin + O2 = (3S,5R,6R)-3,5-dihydroxy-6,7-didehydro-5,6-dihydro-12'-apo-beta-caroten-12'-al + 2-cis,4-trans-xanthoxin. In terms of biological role, has a 11,12(11',12') 9-cis epoxycarotenoid cleavage activity. Catalyzes the first step of abscisic-acid biosynthesis from carotenoids. In Oryza sativa subsp. japonica (Rice), this protein is 9-cis-epoxycarotenoid dioxygenase NCED2, chloroplastic.